Reading from the N-terminus, the 1547-residue chain is DNA topoisomerase 2 (1547 aa).

The segment at 8–30 is disordered; sequence FNKMSSPKQNGTGEPAPAKGQKG. Polar residues predominate over residues 9–19; it reads NKMSSPKQNGT. ATP is bound by residues Asn-99, Asn-128, 156–158, and 169–176; these read SSN and GRNGYGAK. Residues 351–353 are interaction with DNA; it reads KKK. 385–387 lines the ATP pocket; that stretch reads QTK. The Toprim domain occupies 463-580; that stretch reads CTLILTEGDS…ELLKLPFLEE (118 aa). Mg(2+) is bound by residues Glu-469, Asp-549, and Asp-551. One can recognise a Topo IIA-type catalytic domain in the interval 723–1192; it reads IPSMIDGLKP…TAPMLWREDL (470 aa). Tyr-813 functions as the O-(5'-phospho-DNA)-tyrosine intermediate in the catalytic mechanism. The segment at 996–1005 is interaction with DNA; that stretch reads KLQTTISMTC. 4 disordered regions span residues 1107–1134, 1209–1249, 1261–1423, and 1459–1547; these read TALEDDDAQESEEEEPEPDPKGKPVDPD, EELN…ISDD, KTRK…MDSD, and RQRR…SLSD. Over residues 1109 to 1123 the composition is skewed to acidic residues; the sequence is LEDDDAQESEEEEPE. Positions 1124–1134 are enriched in basic and acidic residues; sequence PDPKGKPVDPD. A compositionally biased stretch (basic residues) spans 1216–1228; that stretch reads KTSKAMAGKKNRK. 2 stretches are compositionally biased toward basic and acidic residues: residues 1238–1249 and 1294–1315; these read NGRRVEPKISDD and EKPEKAEKPDKVDKAEKTDGLK. The segment covering 1331 to 1344 has biased composition (low complexity); it reads TFSGSSSGEMSASD. The segment covering 1373–1383 has biased composition (acidic residues); sequence DDSGSDSEPEL. 2 stretches are compositionally biased toward basic and acidic residues: residues 1384-1394 and 1459-1488; these read LDNKIDSDHEA and RQRRCDTSVPPKEKAAPKRKLMNVDKDEKK. The span at 1513-1528 shows a compositional bias: basic residues; sequence KGKKKTAANPKKKAKK. Over residues 1537 to 1547 the composition is skewed to polar residues; sequence DFNISDSSLSD.

This sequence belongs to the type II topoisomerase family. In terms of assembly, homodimer. Mg(2+) serves as cofactor. Requires Mn(2+) as cofactor. Ca(2+) is required as a cofactor.

It localises to the nucleus. The enzyme catalyses ATP-dependent breakage, passage and rejoining of double-stranded DNA.. Control of topological states of DNA by transient breakage and subsequent rejoining of DNA strands. Topoisomerase II makes double-strand breaks. The protein is DNA topoisomerase 2 (TOP2) of Bombyx mori (Silk moth).